The sequence spans 566 residues: Class II hydrophobin FOXG_02748 (566 aa).

A signal peptide spans M1–A22. Disulfide bonds link C497–C546, C507–C537, C508–C520, and C547–C558.

This sequence belongs to the cerato-ulmin hydrophobin family. As to quaternary structure, homodimer. Homodimers further self-assemble to form highly ordered films at water-air interfaces through intermolecular interactions.

The protein localises to the secreted. Its subcellular location is the cell wall. Aerial growth, conidiation, and dispersal of filamentous fungi in the environment rely upon a capability of their secreting small amphipathic proteins called hydrophobins (HPBs) with low sequence identity. Class I can self-assemble into an outermost layer of rodlet bundles on aerial cell surfaces, conferring cellular hydrophobicity that supports fungal growth, development and dispersal; whereas Class II form highly ordered films at water-air interfaces through intermolecular interactions but contribute nothing to the rodlet structure. FOXG_02748 is a class II hydrophobin that is likely required for plant colonization. The protein is Class II hydrophobin FOXG_02748 of Fusarium oxysporum f. sp. lycopersici (strain 4287 / CBS 123668 / FGSC 9935 / NRRL 34936) (Fusarium vascular wilt of tomato).